Consider the following 216-residue polypeptide: UPF0134 protein MPN_344 (216 aa).

A compositionally biased stretch (basic and acidic residues) spans 47 to 62; sequence FTIIEDQQDRPDKPEE. 2 disordered regions span residues 47–104 and 194–216; these read FTII…PKPD and GKMD…LESK. A compositionally biased stretch (pro residues) spans 68–78; it reads IPKPPKPPKGP. Low complexity predominate over residues 83–93; the sequence is EPGQPGGPDDP.

It belongs to the UPF0134 family.

In Mycoplasma pneumoniae (strain ATCC 29342 / M129 / Subtype 1) (Mycoplasmoides pneumoniae), this protein is UPF0134 protein MPN_344.